Reading from the N-terminus, the 74-residue chain is uncharacterized protein (74 aa).

The chain crosses the membrane as a helical span at residues 54 to 72 (LIIPRFLLLIYSVIQCLFL).

It localises to the membrane. This is an uncharacterized protein from Saccharomyces cerevisiae (strain ATCC 204508 / S288c) (Baker's yeast).